The chain runs to 373 residues: ATP-dependent 6-phosphofructokinase (373 aa).

ATP is bound by residues glycine 12, 74–75 (RD), and 110–113 (GGGT). Residues 133 to 135 (TID), arginine 170, 177 to 179 (MGH), glutamate 230, arginine 291, and 297 to 300 (YVQR) contribute to the substrate site. Aspartate 135 (proton acceptor) is an active-site residue.

This sequence belongs to the phosphofructokinase type A (PFKA) family. Mixed-substrate PFK group III subfamily. In terms of assembly, homodimer or homotetramer. Mg(2+) is required as a cofactor.

It is found in the cytoplasm. The enzyme catalyses beta-D-fructose 6-phosphate + ATP = beta-D-fructose 1,6-bisphosphate + ADP + H(+). The protein operates within carbohydrate degradation; glycolysis; D-glyceraldehyde 3-phosphate and glycerone phosphate from D-glucose: step 3/4. Its function is as follows. Catalyzes the phosphorylation of D-fructose 6-phosphate to fructose 1,6-bisphosphate by ATP, the first committing step of glycolysis. The protein is ATP-dependent 6-phosphofructokinase of Propionibacterium freudenreichii subsp. shermanii (strain ATCC 9614 / DSM 4902 / CIP 103027 / NCIMB 8099 / CIRM-BIA1).